A 714-amino-acid polypeptide reads, in one-letter code: MSGFVGVIVSDPWLQSQLTQVELRSLNSKFVALKNQSGKVTLEDLPSVLVKVKSLSSSFKEKEIKEILGGLGSDYESDDDLDFESFLKVYLNLRDKAADKAGGGLKHSSSFLKAGTTTLHTINQSEKGSFVLHINRYLGDDPFLKQFLPLDPDSNDLYELVKDGVLLCKLINIAVPGTIDERAINTKRVLNPWERNENHTLCLNSAKAVGCSVVNIGTQDLAEGRPHLVLGLISQLIKIQLLADLSLKKMPQLVELVEDNEDIEEFLRLPPEKVLLKWMNFHLKKGGYKKTVGNFSSDLKDAQAYAYLLNVLAPEHCDPATLNAEDDLERANMVLEHAERMNCKRYLTAEEIVEGSSYLNLAFVAQIFHERNGLSTDGRFSFAEMMTEDLQTCRDERCYRLWINSLGIESYVNNVFEDVRNGWILLEVVDKVYPGSVNWKQASKPPIKMPFRKVENCNQVVKIGKEMRFSLVNVAGNDIVQGNKKLILGFLWQLMRTHMLQLLKSLRSRTRGKDMTDSEIISWANRKVRIMGRKSQIESFKDKSLSSGLFFLDLLWAVEPRVVNWNLVTKGESDDEKRLNATYIVSVARKLGCSVFLLPEDIVEVNQKMILILTASIMYWSLQQQSSSSESSSSSSDSSSTHSTTTTCTSTCTSTDASPAPSVTGEDEVSSLNGEVSSLTIEEDNEVSSLTIEEDNDADILSDITSISEEAANE.

The EF-hand domain occupies 7-55; sequence VIVSDPWLQSQLTQVELRSLNSKFVALKNQSGKVTLEDLPSVLVKVKSL. 4 Calponin-homology (CH) domains span residues 124-241, 269-372, 393-499, and 514-622; these read QSEK…KIQL, LPPE…HERN, CRDE…RTHM, and DMTD…YWSL. 2 actin-binding regions span residues 124–372 and 393–622; these read QSEK…HERN and CRDE…YWSL. Residues 628–662 are compositionally biased toward low complexity; it reads SSESSSSSSDSSSTHSTTTTCTSTCTSTDASPAPS. The tract at residues 628-694 is disordered; it reads SSESSSSSSD…NEVSSLTIEE (67 aa). Residues 670–680 show a composition bias toward polar residues; it reads SSLNGEVSSLT. The span at 681–694 shows a compositional bias: acidic residues; it reads IEEDNEVSSLTIEE.

As to quaternary structure, interacts with F-actin.

Its subcellular location is the cytoplasm. The protein localises to the cytoskeleton. Functionally, cross-links actin filaments (F-actin). Stabilizes and prevents F-actin depolymerization mediated by profilin. May regulate actin cytoarchitecture, cell cycle, cell division, cell elongation and cytoplasmic tractus. The polypeptide is Fimbrin-3 (Arabidopsis thaliana (Mouse-ear cress)).